The sequence spans 204 residues: MDRVILLLSVVSLGVSSQPITDGQRLFSIAVSRVQHLHQVAQRLFFEFESSLQTEEQRQLNKIFLQDYCNSDNIISPIDKHETQRSSILKLLSISYRLVESWEIPSRSLSGGSAPRNLISPKLTQLKAGILLLIEANQDGAELFPDSSALQLAPYGNYYQSLGADESLRRTYELLACFKKDMHKVETYLTVAKCRLSPEANCTL.

Residues methionine 1 to serine 17 form the signal peptide. Pyrrolidone carboxylic acid is present on glutamine 18. Histidine 36 is a binding site for Zn(2+). The cysteines at positions 69 and 177 are disulfide-linked. Position 186 (glutamate 186) interacts with Zn(2+). Cysteines 194 and 202 form a disulfide.

This sequence belongs to the somatotropin/prolactin family.

It localises to the secreted. Functionally, growth hormone plays an important role in growth control and is involved in the regulation of several anabolic processes. Implicated as an osmoregulatory substance important for seawater adaptation. This chain is Somatotropin (gh), found in Sebastes schlegelii (Korean rockfish).